We begin with the raw amino-acid sequence, 231 residues long: Flagellar L-ring protein 2 (231 aa).

The signal sequence occupies residues 1 to 15; the sequence is MKNLILILPLLMLTG. Cys16 carries the N-palmitoyl cysteine lipid modification. The S-diacylglycerol cysteine moiety is linked to residue Cys16. Residues 30-54 form a disordered region; sequence SPVGSGLRTQADPIPVTPRMRTPVS.

Belongs to the FlgH family. The basal body constitutes a major portion of the flagellar organelle and consists of four rings (L,P,S, and M) mounted on a central rod.

The protein resides in the cell outer membrane. Its subcellular location is the bacterial flagellum basal body. Its function is as follows. Assembles around the rod to form the L-ring and probably protects the motor/basal body from shearing forces during rotation. The protein is Flagellar L-ring protein 2 of Bradyrhizobium diazoefficiens (strain JCM 10833 / BCRC 13528 / IAM 13628 / NBRC 14792 / USDA 110).